The primary structure comprises 532 residues: Probable pectinesterase/pectinesterase inhibitor 39 (532 aa).

A signal peptide spans 1 to 34 (MINNHPIREKPKHIIFNLLSLIFFLIFLSTVVSS). The segment at 35–169 (QSPSYTTHKT…ENLKEIILDI (135 aa)) is pectinesterase inhibitor 39. Asn-62, Asn-74, Asn-85, Asn-172, Asn-221, Asn-231, Asn-244, and Asn-287 each carry an N-linked (GlcNAc...) asparagine glycan. Positions 221 to 518 (NLSVAIDGTG…FTVGPFIDGS (298 aa)) are pectinesterase 39. 2 residues coordinate substrate: Thr-296 and Gln-326. Catalysis depends on Asp-349, which acts as the Proton donor; for pectinesterase activity. Asp-370 functions as the Nucleophile; for pectinesterase activity in the catalytic mechanism. N-linked (GlcNAc...) asparagine glycosylation is found at Asn-382 and Asn-404. Residues Arg-438 and Trp-440 each contribute to the substrate site. Asn-502 and Asn-522 each carry an N-linked (GlcNAc...) asparagine glycan.

The protein in the N-terminal section; belongs to the PMEI family. In the C-terminal section; belongs to the pectinesterase family. In terms of tissue distribution, expressed in siliques but not in flower buds.

The protein resides in the secreted. It localises to the cell wall. The enzyme catalyses [(1-&gt;4)-alpha-D-galacturonosyl methyl ester](n) + n H2O = [(1-&gt;4)-alpha-D-galacturonosyl](n) + n methanol + n H(+). It participates in glycan metabolism; pectin degradation; 2-dehydro-3-deoxy-D-gluconate from pectin: step 1/5. In terms of biological role, acts in the modification of cell walls via demethylesterification of cell wall pectin. This is Probable pectinesterase/pectinesterase inhibitor 39 (PME39) from Arabidopsis thaliana (Mouse-ear cress).